Reading from the N-terminus, the 107-residue chain is Death-associated protein-like 1 (107 aa).

A disordered region spans residues 1–23 (MANEVQDLLSPRKGGHPPAVKAG).

Expressed in hair follicle (at protein level).

In terms of biological role, may play a role in the early stages of epithelial differentiation or in apoptosis. The sequence is that of Death-associated protein-like 1 (DAPL1) from Homo sapiens (Human).